We begin with the raw amino-acid sequence, 305 residues long: Porphobilinogen deaminase (305 aa).

Cysteine 238 bears the S-(dipyrrolylmethanemethyl)cysteine mark.

This sequence belongs to the HMBS family. Monomer. Dipyrromethane serves as cofactor.

It carries out the reaction 4 porphobilinogen + H2O = hydroxymethylbilane + 4 NH4(+). It participates in porphyrin-containing compound metabolism; protoporphyrin-IX biosynthesis; coproporphyrinogen-III from 5-aminolevulinate: step 2/4. In terms of biological role, tetrapolymerization of the monopyrrole PBG into the hydroxymethylbilane pre-uroporphyrinogen in several discrete steps. The protein is Porphobilinogen deaminase of Rubrobacter xylanophilus (strain DSM 9941 / JCM 11954 / NBRC 16129 / PRD-1).